Here is a 153-residue protein sequence, read N- to C-terminus: 6,7-dimethyl-8-ribityllumazine synthase (153 aa).

Residues F21, 55-57 (AFE), and 79-81 (TVI) contribute to the 5-amino-6-(D-ribitylamino)uracil site. 84 to 85 (AT) is a (2S)-2-hydroxy-3-oxobutyl phosphate binding site. H87 acts as the Proton donor in catalysis. F112 is a binding site for 5-amino-6-(D-ribitylamino)uracil. (2S)-2-hydroxy-3-oxobutyl phosphate is bound at residue R126.

It belongs to the DMRL synthase family. As to quaternary structure, forms an icosahedral capsid composed of 60 subunits, arranged as a dodecamer of pentamers.

It carries out the reaction (2S)-2-hydroxy-3-oxobutyl phosphate + 5-amino-6-(D-ribitylamino)uracil = 6,7-dimethyl-8-(1-D-ribityl)lumazine + phosphate + 2 H2O + H(+). The protein operates within cofactor biosynthesis; riboflavin biosynthesis; riboflavin from 2-hydroxy-3-oxobutyl phosphate and 5-amino-6-(D-ribitylamino)uracil: step 1/2. Catalyzes the formation of 6,7-dimethyl-8-ribityllumazine by condensation of 5-amino-6-(D-ribitylamino)uracil with 3,4-dihydroxy-2-butanone 4-phosphate. This is the penultimate step in the biosynthesis of riboflavin. This is 6,7-dimethyl-8-ribityllumazine synthase from Bacillus cereus (strain 03BB102).